The chain runs to 112 residues: Nitrogenase iron-iron protein delta chain (112 aa).

As to quaternary structure, hexamer of two alpha, two beta, and two delta chains. The cofactor is iron-sulfur cluster.

It carries out the reaction N2 + 8 reduced [2Fe-2S]-[ferredoxin] + 16 ATP + 16 H2O = H2 + 8 oxidized [2Fe-2S]-[ferredoxin] + 2 NH4(+) + 16 ADP + 16 phosphate + 6 H(+). Functionally, the key enzymatic reactions in nitrogen fixation are catalyzed by the nitrogenase complex, which has 2 components: the iron protein (component 2) and a component 1 which is either a molybdenum-iron protein, a vanadium-iron, or an iron-iron protein. The sequence is that of Nitrogenase iron-iron protein delta chain (anfG) from Azomonas macrocytogenes (Azotobacter macrocytogenes).